A 271-amino-acid chain; its full sequence is MKVMVLSLGKASPSKSDHELLDPFVSLVEFSVSPPGGFKDHPHRGFESVTYMFQGGIIHQDCNGNKGTIHEGDVQWMTAGRGIIHSEMPEEQVNKGLQLWINLPSSAKMIEPKNIEISSSEIPSADDYGVEVKVIAGESMGVKSPFYTKTPIMFLDFTLDPKAQTHQAVPESWTAFAYIVEGDEGVFSSSDSSTVQAHNVVVFGTGDEVSVWNTSNSRPLRFLLIAGEPIGEPVVQHGPFVMNSQDEIEMTIGDYRNGMNGFEMAKHWRSE.

This sequence belongs to the pirin family.

The protein resides in the nucleus. In Arabidopsis thaliana (Mouse-ear cress), this protein is Putative pirin-like protein At3g59260.